Consider the following 151-residue polypeptide: Ribosome maturation factor RimP (151 aa).

This sequence belongs to the RimP family.

The protein resides in the cytoplasm. Its function is as follows. Required for maturation of 30S ribosomal subunits. This chain is Ribosome maturation factor RimP, found in Shewanella sediminis (strain HAW-EB3).